We begin with the raw amino-acid sequence, 37 residues long: Cytochrome b6-f complex subunit 5 (37 aa).

A helical transmembrane segment spans residues 5 to 25; sequence LLSGIILGLIPVTLSGLLVAA.

It belongs to the PetG family. The 4 large subunits of the cytochrome b6-f complex are cytochrome b6, subunit IV (17 kDa polypeptide, PetD), cytochrome f and the Rieske protein, while the 4 small subunits are PetG, PetL, PetM and PetN. The complex functions as a dimer.

The protein localises to the plastid. Its subcellular location is the chloroplast thylakoid membrane. In terms of biological role, component of the cytochrome b6-f complex, which mediates electron transfer between photosystem II (PSII) and photosystem I (PSI), cyclic electron flow around PSI, and state transitions. PetG is required for either the stability or assembly of the cytochrome b6-f complex. In Porphyra purpurea (Red seaweed), this protein is Cytochrome b6-f complex subunit 5.